The chain runs to 1340 residues: Thioester-containing protein 1 allele S1 (1340 aa).

Residues 1–21 (MWQFIRSRILTVIIFIGAAHG) form the signal peptide. 5 N-linked (GlcNAc...) asparagine glycosylation sites follow: Asn-68, Asn-199, Asn-242, Asn-312, and Asn-481. A may contain the cleavage site region spans residues 580 to 609 (ENEFDIFHSLGLFARTLDDILFDSANEKTG). Residues Asn-637, Asn-728, Asn-813, and Asn-828 are each glycosylated (N-linked (GlcNAc...) asparagine). The segment at residues 859–862 (CGEQ) is a cross-link (isoglutamyl cysteine thioester (Cys-Gln)). Intrachain disulfides connect Cys-1217–Cys-1283, Cys-1326–Cys-1338, and Cys-1329–Cys-1334.

In terms of assembly, heterodimer of a TEP1-N chain and an TEP1-C chain non-covalently linked. Forms a complex composed of TEP1-N and TEP1-C heterodimer, LRIM1 and APL1C; the interaction stabilizes TEP1-N and TEP1-C heterodimer, prevents its binding to tissues while circulating in the hemolymph and protects the thioester bond from hydrolysis. Mature TEP1 and to a lesser extent full-length TEP1 interact with SPCLIP1; the interaction is induced by microbial infection. In terms of processing, in the hemolymph, the full-length protein is cleaved by an unknow protease into a 75kDa N-terminal (TEP1-N) chain and an 80kDa C-terminal (TEP1-C) chain which remain non-covalently linked. The TEP1-C chain contains the thioester bond which covalently binds to the pathogen surface. Cleavage is induced by bacterial infection or aseptic wound injury. During embryonic and pupal development, the cleaved form is the predominant form. Post-translationally, N-glycosylated. In terms of tissue distribution, specifically expressed in hemocytes (at protein level).

Its subcellular location is the secreted. Plays an essential role in the innate immune response to bacteria and protozoa infection. After proteolytic cleavage, the protein C-terminus binds covalently through a thioester bond to the pathogen surface resulting in pathogen clearance either by melanization or lysis. Initiate the recruitment and activation of a cascade of proteases, mostly of CLIP-domain serine proteases, which leads to the proteolytic cleavage of the prophenoloxidase (PPO) into active phenoloxidase (PO), the rate-limiting enzyme in melanin biosynthesis. In response to parasite P.berghei-mediated infection, binds to and mediates killing of ookinetes, as they egress from midgut epithelial cells into the basal labyrinth, by both lysis and melanization. During bacterial infection, binds to both Gram-positive and Gram-negative bacteria but only promotes phagocytosis of Gram-negative bacteria. Promotes the accumulation of SPCLIP1 onto the surface of P.berghei ookinetes and bacterium E.coli which leads to the melanization of the pathogen. Recruits CLIPA2 to bacteria surface. In response to bacterial infection, required for periostial hemocyte aggregation, but not for the aggregation of sessile hemocytes in non-periostial regions. During the late stage of fungus B.bassiana-mediated infection, required for the initiation of hyphae melanization by binding to the surface of hyphae and recruiting prophenoloxidase PPO to them. Plays a role in male fertility by binding to defective sperm cells and promoting their removal during spermatogenesis. Its function is as follows. Binds covalently through a thioester bond to the pathogen surface resulting in pathogen clearance. The sequence is that of Thioester-containing protein 1 allele S1 from Anopheles gambiae (African malaria mosquito).